The primary structure comprises 156 residues: Rhombotin-1 (156 aa).

2 LIM zinc-binding domains span residues Lys-22–Thr-84 and Gly-86–Asn-148.

In terms of tissue distribution, expressed in the brain and not in the thymus.

It is found in the nucleus. In terms of biological role, may be involved in gene regulation within neural lineage cells potentially by direct DNA binding or by binding to other transcription factors. This is Rhombotin-1 (Lmo1) from Mus musculus (Mouse).